The following is a 1205-amino-acid chain: cGMP-specific 3',5'-cyclic phosphodiesterase (1205 aa).

The tract at residues 1 to 153 (MTDVSSPAGG…TKASTTASQQ (153 aa)) is disordered. Over residues 18–32 (TTSSSPAATTSASSS) the composition is skewed to low complexity. The segment covering 33–48 (KPLTNGANKTTISTTA) has biased composition (polar residues). The span at 62 to 71 (GAIPASSSSG) shows a compositional bias: low complexity. Positions 83 to 94 (SNNNRPAATNRS) are enriched in polar residues. The segment covering 118 to 140 (SSSSPSQSPSQTQASIQTQTSQQ) has biased composition (low complexity). GAF domains are found at residues 259–411 (DIDV…GIGI) and 443–624 (NLEC…GLGI). The PDEase domain maps to 654–1052 (SQDQTEKLTQ…RNWQDLAEKV (399 aa)). The Proton donor role is filled by histidine 730. Positions 734, 770, 771, and 956 each coordinate a divalent metal cation. Disordered regions lie at residues 1093 to 1122 (QQSQ…TGAL) and 1152 to 1205 (SHVS…CALL). Basic and acidic residues-rich tracts occupy residues 1098-1109 (GSEDSHTPEHQR) and 1152-1162 (SHVSEDMDDKS). Positions 1171–1191 (ASGSMGRMSASSSTSSAGGQM) are enriched in low complexity. Over residues 1195-1205 (SKKRSKLCALL) the composition is skewed to basic residues. Cysteine 1202 is subject to Cysteine methyl ester. A lipid anchor (S-farnesyl cysteine) is attached at cysteine 1202. Residues 1203 to 1205 (ALL) constitute a propeptide, removed in mature form.

This sequence belongs to the cyclic nucleotide phosphodiesterase family. As to quaternary structure, interacts with PrBP. A divalent metal cation is required as a cofactor.

It is found in the cell membrane. The catalysed reaction is 3',5'-cyclic GMP + H2O = GMP + H(+). In terms of biological role, has a role regulating cGMP transport in Malpighian tubule principal cells. The protein is cGMP-specific 3',5'-cyclic phosphodiesterase of Drosophila sechellia (Fruit fly).